The primary structure comprises 392 residues: Methylthioribose kinase (392 aa).

Residues N38, K53, and 107–109 each bind ATP; that span reads EDL. Position 225 (D225) interacts with substrate. Residue 242–244 coordinates ATP; sequence DPE. Position 332 (R332) interacts with substrate.

Belongs to the methylthioribose kinase family. In terms of assembly, homodimer.

The catalysed reaction is 5-(methylsulfanyl)-D-ribose + ATP = 5-(methylsulfanyl)-alpha-D-ribose 1-phosphate + ADP + H(+). Its pathway is amino-acid biosynthesis; L-methionine biosynthesis via salvage pathway; S-methyl-5-thio-alpha-D-ribose 1-phosphate from S-methyl-5'-thioadenosine (hydrolase route): step 2/2. In terms of biological role, catalyzes the phosphorylation of methylthioribose into methylthioribose-1-phosphate. The chain is Methylthioribose kinase from Bacillus mycoides (strain KBAB4) (Bacillus weihenstephanensis).